We begin with the raw amino-acid sequence, 140 residues long: Nucleoside diphosphate kinase (140 aa).

Residues lysine 11, phenylalanine 59, arginine 87, threonine 93, arginine 104, and asparagine 114 each contribute to the ATP site. The Pros-phosphohistidine intermediate role is filled by histidine 117.

It belongs to the NDK family. Homotetramer. The cofactor is Mg(2+).

The protein localises to the cytoplasm. It catalyses the reaction a 2'-deoxyribonucleoside 5'-diphosphate + ATP = a 2'-deoxyribonucleoside 5'-triphosphate + ADP. The catalysed reaction is a ribonucleoside 5'-diphosphate + ATP = a ribonucleoside 5'-triphosphate + ADP. In terms of biological role, major role in the synthesis of nucleoside triphosphates other than ATP. The ATP gamma phosphate is transferred to the NDP beta phosphate via a ping-pong mechanism, using a phosphorylated active-site intermediate. The protein is Nucleoside diphosphate kinase of Brucella canis (strain ATCC 23365 / NCTC 10854 / RM-666).